Consider the following 657-residue polypeptide: Protein FAM200B (657 aa).

The protein belongs to the FAM200 family.

In Homo sapiens (Human), this protein is Protein FAM200B.